The chain runs to 806 residues: Ribonucleoside-diphosphate reductase large subunit (806 aa).

In terms of domain architecture, ATP-cone spans 1–91 (MYVLNRKGEE…TDNLHKNTSD (91 aa)). ATP-binding positions include 5–6 (NR), 11–17 (EDISFDQ), T52, and D56. A GDP-binding site is contributed by S215. C216 and C442 are oxidised to a cystine. DTTP is bound by residues 224 to 226 (DSI), K241, R254, and 261 to 262 (RG). N425 is a binding site for GDP. N425 acts as the Proton acceptor in catalysis. The Cysteine radical intermediate role is filled by C427. GDP is bound by residues E429 and 604 to 607 (TAST). Residue E429 is the Proton acceptor of the active site.

It belongs to the ribonucleoside diphosphate reductase large chain family. In terms of assembly, heterodimer of a large and a small subunit.

It catalyses the reaction a 2'-deoxyribonucleoside 5'-diphosphate + [thioredoxin]-disulfide + H2O = a ribonucleoside 5'-diphosphate + [thioredoxin]-dithiol. Under complex allosteric control mediated by deoxynucleoside triphosphates and ATP binding to separate specificity and activation sites on the large subunit. The type of nucleotide bound at the specificity site determines substrate preference. It seems probable that ATP makes the enzyme reduce CDP and UDP, dGTP favors ADP reduction and dTTP favors GDP reduction. Stimulated by ATP and inhibited by dATP binding to the activity site. Its function is as follows. Provides the precursors necessary for DNA synthesis. Catalyzes the biosynthesis of deoxyribonucleotides from the corresponding ribonucleotides. In Plasmodium falciparum (isolate Dd2), this protein is Ribonucleoside-diphosphate reductase large subunit (RNR1).